The following is a 489-amino-acid chain: Coronin-1B (489 aa).

Position 2 is a phosphoserine (Ser2). WD repeat units lie at residues 80–120 (GHTG…LTSP), 130–170 (GHTK…ELYR), 174–213 (LHPD…LVAE), 217–260 (AHEG…EPMA), and 265–305 (DSSN…PYIH). The segment at 414–443 (DSRPAMAPGSSRLGAPASTTAAADATPSGS) is disordered. A compositionally biased stretch (low complexity) spans 427–443 (GAPASTTAAADATPSGS). Positions 449–474 (EAGKLEEVMQELRALRALVKEQGERI) form a coiled coil.

This sequence belongs to the WD repeat coronin family. In terms of assembly, forms homooligomers, but does not form complexes with the other coronins. Interacts with Arp2/3 complex components, including ACTR2, ARPC1B and ARPC2. Binds actin. Post-translationally, phosphorylation on Ser-2 regulates the interaction with the Arp2/3 complex and cell motility in fibroblasts. Phosphorylation does not seem to affect subcellular location.

The protein resides in the cytoplasm. It is found in the cytoskeleton. The protein localises to the stress fiber. Its function is as follows. Regulates leading edge dynamics and cell motility in fibroblasts. May be involved in cytokinesis and signal transduction. The chain is Coronin-1B (CORO1B) from Pongo abelii (Sumatran orangutan).